Here is a 341-residue protein sequence, read N- to C-terminus: KH domain-containing RNA-binding protein QKI (341 aa).

Residues 11–82 (PKPTPDYLMQ…PDAVGPIVQL (72 aa)) form a qua1 domain; involved in homodimerization region. One can recognise a KH domain in the interval 87–153 (YVPVKEYPDF…WEHLNEDLHV (67 aa)). The qua2 domain; involved in RNA binding stretch occupies residues 182–213 (AAEGEDSLKKMQLMELAILNGTYRDANIKSPA). At serine 188 the chain carries Phosphoserine. Arginine 227 carries the omega-N-methylarginine modification. Position 242 is an asymmetric dimethylarginine; by CARM1; alternate (arginine 242). Arginine 242 bears the Omega-N-methylarginine; alternate mark. Arginine 256 carries the omega-N-methylarginine modification. The SH3-binding signature appears at 276-279 (PPGP). Positions 324 to 330 (RVHPYQR) match the Nuclear localization signal motif.

It belongs to the quaking family. Homodimer; does not require RNA to homodimerize. Able to heterodimerize with BICC1. Methylated by PRMT1. In terms of processing, tyrosine phosphorylated at its C-terminus, probably by FYN. Phosphorylation leads to decreased mRNA-binding affinity, affecting transport and/or stabilization of MBP mRNA. Post-translationally, ubiquitinated by RNF6 in macrophages, leading to its degradation.

The protein resides in the nucleus. It is found in the cytoplasm. Functionally, RNA reader protein, which recognizes and binds specific RNAs, thereby regulating RNA metabolic processes, such as pre-mRNA splicing, circular RNA (circRNA) formation, mRNA export, mRNA stability and/or translation. Involved in various cellular processes, such as mRNA storage into stress granules, apoptosis, lipid deposition, interferon response, glial cell fate and development. Binds to the 5'-NACUAAY-N(1,20)-UAAY-3' RNA core sequence. Acts as a mRNA modification reader that specifically recognizes and binds mRNA transcripts modified by internal N(7)-methylguanine (m7G). Promotes the formation of circular RNAs (circRNAs) during the epithelial to mesenchymal transition and in cardiomyocytes: acts by binding to sites flanking circRNA-forming exons. CircRNAs are produced by back-splicing circularization of pre-mRNAs. Plays a central role in myelinization via 3 distinct mechanisms. First, acts by protecting and promoting stability of target mRNAs such as MBP, SIRT2 and CDKN1B, which promotes oligodendrocyte differentiation. Second, participates in mRNA transport by regulating the nuclear export of MBP mRNA. Finally, indirectly regulates mRNA splicing of MAG pre-mRNA during oligodendrocyte differentiation by acting as a negative regulator of MAG exon 12 alternative splicing: acts by binding to HNRNPA1 mRNA splicing factor, preventing its translation. Involved in microglia differentiation and remyelination by regulating microexon alternative splicing of the Rho GTPase pathway. Involved in macrophage differentiation: promotes monocyte differentiation by regulating pre-mRNA splicing in naive peripheral blood monocytes. Acts as an important regulator of muscle development: required for the contractile function of cardiomyocytes by regulating alternative splicing of cardiomyocyte transcripts. Acts as a negative regulator of thermogenesis by decreasing stability, nuclear export and translation of mRNAs encoding PPARGC1A and UCP1. Also required for visceral endoderm function and blood vessel development. May also play a role in smooth muscle development. In addition to its RNA-binding activity, also acts as a nuclear transcription coactivator for SREBF2/SREBP2. The sequence is that of KH domain-containing RNA-binding protein QKI from Bos taurus (Bovine).